Reading from the N-terminus, the 229-residue chain is Geodin cluster transcription factor (229 aa).

Residues 12 to 39 (CHACAASKVRCSKEKPTCSRCSKRGTTC) constitute a DNA-binding region (zn(2)-C6 fungal-type). 2 disordered regions span residues 50–100 (KQLN…PGTT) and 141–169 (TANSEPLDAEGGITSSHNTSSNSPARPPT). 2 stretches are compositionally biased toward polar residues: residues 51–71 (QLNNRSTAKESSNTTRTSLAT) and 153–164 (ITSSHNTSSNSP).

Its subcellular location is the nucleus. Transcription factor that regulates the expression of the gene cluster that mediates the biosynthesis of geodin, an intermediate in the biosynthesis of other natural products. This chain is Geodin cluster transcription factor, found in Aspergillus terreus (strain NIH 2624 / FGSC A1156).